The following is a 20-amino-acid chain: Collagenolytic protease 36 kDa A (20 aa).

Residues 1–20 (IVGGTEVTPGEIPYQLSLQD) form the Peptidase S1 domain. The interval 1 to 20 (IVGGTEVTPGEIPYQLSLQD) is disordered.

This sequence belongs to the peptidase S1 family.

The catalysed reaction is Hydrolysis of proteins, with broad specificity for peptide bonds. Native collagen is cleaved about 75% of the length of the molecule from the N-terminus. Low activity on small molecule substrates of both trypsin and chymotrypsin.. Functionally, this enzyme is a serine protease capable of degrading the native triple helix of collagen. In Paralithodes camtschaticus (Red king crab), this protein is Collagenolytic protease 36 kDa A.